A 142-amino-acid chain; its full sequence is Large ribosomal subunit protein uL13 (142 aa).

The protein belongs to the universal ribosomal protein uL13 family. Part of the 50S ribosomal subunit.

Its function is as follows. This protein is one of the early assembly proteins of the 50S ribosomal subunit, although it is not seen to bind rRNA by itself. It is important during the early stages of 50S assembly. This Vibrio vulnificus (strain CMCP6) protein is Large ribosomal subunit protein uL13.